Consider the following 874-residue polypeptide: Alanine--tRNA ligase (874 aa).

Zn(2+) contacts are provided by His562, His566, Cys664, and His668.

This sequence belongs to the class-II aminoacyl-tRNA synthetase family. Zn(2+) is required as a cofactor.

It is found in the cytoplasm. It catalyses the reaction tRNA(Ala) + L-alanine + ATP = L-alanyl-tRNA(Ala) + AMP + diphosphate. Functionally, catalyzes the attachment of alanine to tRNA(Ala) in a two-step reaction: alanine is first activated by ATP to form Ala-AMP and then transferred to the acceptor end of tRNA(Ala). Also edits incorrectly charged Ser-tRNA(Ala) and Gly-tRNA(Ala) via its editing domain. The polypeptide is Alanine--tRNA ligase (Shewanella denitrificans (strain OS217 / ATCC BAA-1090 / DSM 15013)).